The chain runs to 211 residues: tRNA (guanine-N(7)-)-methyltransferase (211 aa).

S-adenosyl-L-methionine is bound by residues E43, D68, N95, and N117. Residues K121, D153, and 190–193 contribute to the substrate site; that span reads TEYE.

The protein belongs to the class I-like SAM-binding methyltransferase superfamily. TrmB family.

It carries out the reaction guanosine(46) in tRNA + S-adenosyl-L-methionine = N(7)-methylguanosine(46) in tRNA + S-adenosyl-L-homocysteine. It participates in tRNA modification; N(7)-methylguanine-tRNA biosynthesis. Its function is as follows. Catalyzes the formation of N(7)-methylguanine at position 46 (m7G46) in tRNA. The polypeptide is tRNA (guanine-N(7)-)-methyltransferase (Clostridium kluyveri (strain ATCC 8527 / DSM 555 / NBRC 12016 / NCIMB 10680 / K1)).